A 401-amino-acid chain; its full sequence is Beta-ketoadipyl-CoA thiolase (401 aa).

The active-site Acyl-thioester intermediate is C91. Active-site proton acceptor residues include H357 and C387.

It belongs to the thiolase-like superfamily. Thiolase family. As to quaternary structure, homotetramer.

It catalyses the reaction succinyl-CoA + acetyl-CoA = 3-oxoadipyl-CoA + CoA. It functions in the pathway aromatic compound metabolism; beta-ketoadipate pathway; acetyl-CoA and succinyl-CoA from 3-oxoadipate: step 2/2. Catalyzes thiolytic cleavage of beta-ketoadipyl-CoA to succinyl-CoA and acetyl-CoA. This is Beta-ketoadipyl-CoA thiolase (pcaF) from Pseudomonas knackmussii (strain DSM 6978 / CCUG 54928 / LMG 23759 / B13).